We begin with the raw amino-acid sequence, 381 residues long: MESIGIVAPQTMHFAEPLRLQSGSVIGNYQLVVETYGELNAARSNAVLVCHALNASHHVAGVYADDPRSTGWWDNMVGPGKPLDTNRFFVIGVNNLGSCFGSTGPMSIDPSSGKPYGARFPVVTVEDWVHAQARVADAFGIERFAAVMGGSLGGMQALAWSLMYPERVAHCIDIASTPKLSAQNIAFNEVARSAILSDPDFHGGDYYAHGVKPKRGLRVARMIGHITYLSDDDMAEKFGRALRRADGALDAYNFSFDVEFEVESYLRYQGDKFADYFDANTYLLITRALDYFDPAKAFDGNLTAALAHTQAKYLIASFSTDWRFAPARSREIVKALLDNKRTVSYAEIDAPHGHDAFLLDDARYHNLLRAYYERIANEVGA.

The AB hydrolase-1 domain occupies 45–360 (NAVLVCHALN…PHGHDAFLLD (316 aa)). S151 functions as the Nucleophile in the catalytic mechanism. Residue R221 coordinates substrate. Active-site residues include D321 and H354. D355 serves as a coordination point for substrate.

This sequence belongs to the AB hydrolase superfamily. MetX family. In terms of assembly, homodimer.

The protein localises to the cytoplasm. It catalyses the reaction L-homoserine + succinyl-CoA = O-succinyl-L-homoserine + CoA. The protein operates within amino-acid biosynthesis; L-methionine biosynthesis via de novo pathway; O-succinyl-L-homoserine from L-homoserine: step 1/1. Its function is as follows. Transfers a succinyl group from succinyl-CoA to L-homoserine, forming succinyl-L-homoserine. The chain is Homoserine O-succinyltransferase from Burkholderia ambifaria (strain ATCC BAA-244 / DSM 16087 / CCUG 44356 / LMG 19182 / AMMD) (Burkholderia cepacia (strain AMMD)).